We begin with the raw amino-acid sequence, 550 residues long: MAAKEIRFSDDARQRMMSGVNQLANAVKVTLGPRGRNAVLEKSFGAPTVTKDGVSVAKEIELEDHFENMGAQMLKEVSSQTSDVAGDGTTTATVLAQAILREGMKSLAAGMSPMELKKGIEKATEAASNYLSDELSKPCEDDNSIAQVGTISANSDEAVGRIIADAMGKVGKEGVITVEEGSGLDNELDVVEGMQFDRGYLSPYFVTDQQTMKAELEDAAILLHDKKISNIRDLLPLLEGVAKQNRPLLIIAEEVEGEALATLVVNNLRGIVKVAAVKAPGFGDRRKAMLQDIAILTGGTVISDEVGMTLENATVDDLGTAKKVQISKEETTIVGGAGRHDDIMARVEQIRAQMEESTSDYDKEKLQERVAKLVGGVAVIKVGAATEVEMKEKKARVEDALHATRAAVEEGIVPGGGTALIRALAALEGLSGANEEQTQGIALVRRAMEEPLRQLVLNAGEDASVVVNKVREGTGNHGYNVATGEYGDLVQAGVLDPTKVTRSALQNAASVAALMLTTEAMVADLPKKDDEGGGGDMGGMGGMGGMGGMM.

ATP is bound by residues 30-33 (TLGP), K51, 87-91 (DGTTT), G416, 480-482 (NVA), and D496. The interval 525–550 (LPKKDDEGGGGDMGGMGGMGGMGGMM) is disordered. A compositionally biased stretch (gly residues) spans 534-550 (GGDMGGMGGMGGMGGMM).

Belongs to the chaperonin (HSP60) family. As to quaternary structure, forms a cylinder of 14 subunits composed of two heptameric rings stacked back-to-back. Interacts with the co-chaperonin GroES.

It localises to the cytoplasm. The catalysed reaction is ATP + H2O + a folded polypeptide = ADP + phosphate + an unfolded polypeptide.. In terms of biological role, together with its co-chaperonin GroES, plays an essential role in assisting protein folding. The GroEL-GroES system forms a nano-cage that allows encapsulation of the non-native substrate proteins and provides a physical environment optimized to promote and accelerate protein folding. This chain is Chaperonin GroEL, found in Halorhodospira halophila (strain DSM 244 / SL1) (Ectothiorhodospira halophila (strain DSM 244 / SL1)).